Here is a 240-residue protein sequence, read N- to C-terminus: Pyridoxine 5'-phosphate synthase (240 aa).

N6 is a 3-amino-2-oxopropyl phosphate binding site. Residue 8-9 (DH) participates in 1-deoxy-D-xylulose 5-phosphate binding. R17 serves as a coordination point for 3-amino-2-oxopropyl phosphate. The active-site Proton acceptor is H42. 2 residues coordinate 1-deoxy-D-xylulose 5-phosphate: R44 and H49. The Proton acceptor role is filled by E69. T99 provides a ligand contact to 1-deoxy-D-xylulose 5-phosphate. The active-site Proton donor is the H190. 3-amino-2-oxopropyl phosphate-binding positions include G191 and 212 to 213 (GH).

This sequence belongs to the PNP synthase family. Homooctamer; tetramer of dimers.

Its subcellular location is the cytoplasm. The catalysed reaction is 3-amino-2-oxopropyl phosphate + 1-deoxy-D-xylulose 5-phosphate = pyridoxine 5'-phosphate + phosphate + 2 H2O + H(+). It participates in cofactor biosynthesis; pyridoxine 5'-phosphate biosynthesis; pyridoxine 5'-phosphate from D-erythrose 4-phosphate: step 5/5. In terms of biological role, catalyzes the complicated ring closure reaction between the two acyclic compounds 1-deoxy-D-xylulose-5-phosphate (DXP) and 3-amino-2-oxopropyl phosphate (1-amino-acetone-3-phosphate or AAP) to form pyridoxine 5'-phosphate (PNP) and inorganic phosphate. The polypeptide is Pyridoxine 5'-phosphate synthase (Pseudomonas putida (strain ATCC 700007 / DSM 6899 / JCM 31910 / BCRC 17059 / LMG 24140 / F1)).